Here is a 100-residue protein sequence, read N- to C-terminus: Urease subunit gamma (100 aa).

Belongs to the urease gamma subunit family. In terms of assembly, heterotrimer of UreA (gamma), UreB (beta) and UreC (alpha) subunits. Three heterotrimers associate to form the active enzyme.

It localises to the cytoplasm. The catalysed reaction is urea + 2 H2O + H(+) = hydrogencarbonate + 2 NH4(+). It functions in the pathway nitrogen metabolism; urea degradation; CO(2) and NH(3) from urea (urease route): step 1/1. This is Urease subunit gamma from Synechococcus sp. (strain WH7805).